The chain runs to 224 residues: Ribosomal RNA small subunit methyltransferase G (224 aa).

Residues G89, L94, 140–141 (IE), and R154 contribute to the S-adenosyl-L-methionine site.

It belongs to the methyltransferase superfamily. RNA methyltransferase RsmG family.

It localises to the cytoplasm. It carries out the reaction guanosine(527) in 16S rRNA + S-adenosyl-L-methionine = N(7)-methylguanosine(527) in 16S rRNA + S-adenosyl-L-homocysteine. Functionally, specifically methylates the N7 position of guanine in position 527 of 16S rRNA. This is Ribosomal RNA small subunit methyltransferase G from Bordetella avium (strain 197N).